The sequence spans 513 residues: Histidine ammonia-lyase (513 aa).

The 5-imidazolinone (Ala-Gly) cross-link spans 142-144 (ASG). Ser-143 carries the post-translational modification 2,3-didehydroalanine (Ser).

This sequence belongs to the PAL/histidase family. Post-translationally, contains an active site 4-methylidene-imidazol-5-one (MIO), which is formed autocatalytically by cyclization and dehydration of residues Ala-Ser-Gly.

It localises to the cytoplasm. It catalyses the reaction L-histidine = trans-urocanate + NH4(+). The protein operates within amino-acid degradation; L-histidine degradation into L-glutamate; N-formimidoyl-L-glutamate from L-histidine: step 1/3. The chain is Histidine ammonia-lyase from Hyphomonas neptunium (strain ATCC 15444).